We begin with the raw amino-acid sequence, 603 residues long: Arginine--tRNA ligase (603 aa).

The 'HIGH' region motif lies at 143–153 (PNIAKEMHVGH).

Belongs to the class-I aminoacyl-tRNA synthetase family. In terms of assembly, monomer.

The protein resides in the cytoplasm. It catalyses the reaction tRNA(Arg) + L-arginine + ATP = L-arginyl-tRNA(Arg) + AMP + diphosphate. This Prochlorococcus marinus (strain MIT 9211) protein is Arginine--tRNA ligase.